Reading from the N-terminus, the 181-residue chain is CD160 antigen (181 aa).

Positions 1–24 (MLLEPGRGCCALAILLAIVDIQSG) are cleaved as a signal peptide. The 109-residue stretch at 25–133 (GCINITSSAS…QGHFFSILFT (109 aa)) folds into the Ig-like V-type domain. The N-linked (GlcNAc...) asparagine glycan is linked to Asn-28. 2 disulfides stabilise this stretch: Cys-44/Cys-112 and Cys-61/Cys-68. The N-linked (GlcNAc...) asparagine glycan is linked to Asn-137. Residue Ser-159 is the site of GPI-anchor amidated serine attachment. Residues 160-181 (SGFLQEKVWVMLVTSLVALQAL) constitute a propeptide, removed in mature form.

As to quaternary structure, homomultimer; disulfide-linked. Interacts with HLA-G. Interacts with HLA-A2-B2M in complex with an HIV-derived peptide. Interacts with TNFRSF14 (via cysteine-rich domain 1); this interaction is direct. Interacts with LCK and CD247/CD3 zeta chain. In terms of tissue distribution, expression is restricted to functional NK and cytotoxic T lymphocytes. Expressed in viral-specific effector memory and terminally differentiated effector memory CD8+ T cells. Expressed in memory and activated CD4+ T cell subsets (at protein level). Expressed at high levels in intraepithelial lymphocytes (at protein level). Expressed in both alpha-beta and gamma-delta CD8+ T cell subsets (at protein level). Expressed in umbilical vein endothelial cells (at protein level). Expressed in monocytes and at lower levels in B cells. Isoform 3: Expressed exclusively in activated NK cells (at protein level).

Its subcellular location is the cell membrane. The protein resides in the secreted. Functionally, receptor on immune cells capable to deliver stimulatory or inhibitory signals that regulate cell activation and differentiation. Exists as a GPI-anchored and as a transmembrane form, each likely initiating distinct signaling pathways via phosphoinositol 3-kinase in activated NK cells and via LCK and CD247/CD3 zeta chain in activated T cells. Receptor for both classical and non-classical MHC class I molecules. In the context of acute viral infection, recognizes HLA-C and triggers NK cell cytotoxic activity, likely playing a role in anti-viral innate immune response. On CD8+ T cells, binds HLA-A2-B2M in complex with a viral peptide and provides a costimulatory signal to activated/memory T cells. Upon persistent antigen stimulation, such as occurs during chronic viral infection, may progressively inhibit TCR signaling in memory CD8+ T cells, contributing to T cell exhaustion. On endothelial cells, recognizes HLA-G and controls angiogenesis in immune privileged sites. Receptor or ligand for TNF superfamily member TNFRSF14, participating in bidirectional cell-cell contact signaling between antigen presenting cells and lymphocytes. Upon ligation of TNFRSF14, provides stimulatory signal to NK cells enhancing IFNG production and anti-tumor immune response. On activated CD4+ T cells, interacts with TNFRSF14 and down-regulates CD28 costimulatory signaling, restricting memory and alloantigen-specific immune response. In the context of bacterial infection, acts as a ligand for TNFRSF14 on epithelial cells, triggering the production of antimicrobial proteins and pro-inflammatory cytokines. In terms of biological role, the soluble GPI-cleaved form, usually released by activated lymphocytes, might play an immune regulatory role by limiting lymphocyte effector functions. This is CD160 antigen from Homo sapiens (Human).